The chain runs to 519 residues: 6-phosphofructo-2-kinase/fructose-2,6-bisphosphatase 2 (519 aa).

The span at 1 to 17 (MSENSTFSTEDSCNSSY) shows a compositional bias: polar residues. The interval 1–22 (MSENSTFSTEDSCNSSYKPHAS) is disordered. At serine 2 the chain carries N-acetylserine. Residues 2-251 (SENSTFSTED…VYYLMNIHVH (250 aa)) are 6-phosphofructo-2-kinase. Residue serine 32 is modified to Phosphoserine; by PKA. 48–56 (GLPARGKTY) provides a ligand contact to ATP. Positions 81 and 105 each coordinate beta-D-fructose 6-phosphate. The active site involves aspartate 131. Residues threonine 133 and arginine 139 each coordinate beta-D-fructose 6-phosphate. The active site involves cysteine 161. 170–175 (NILEVK) provides a ligand contact to ATP. Residues lysine 175, arginine 196, and tyrosine 200 each coordinate beta-D-fructose 6-phosphate. The fructose-2,6-bisphosphatase stretch occupies residues 252–519 (PRTIYLCRHG…PKTQVSIPVV (268 aa)). Arginine 259 is a binding site for beta-D-fructose 2,6-bisphosphate. Histidine 260 (tele-phosphohistidine intermediate) is an active-site residue. Residues asparagine 266 and glycine 272 each contribute to the beta-D-fructose 2,6-bisphosphate site. The active-site Proton donor/acceptor is the glutamate 329. 6 residues coordinate beta-D-fructose 2,6-bisphosphate: tyrosine 340, arginine 354, lysine 358, tyrosine 369, glutamine 395, and arginine 399. 351–354 (FALR) is a binding site for ATP. Residues 395-399 (QAVMR) and tyrosine 431 contribute to the ATP site. The interval 448 to 493 (HRDKPTHNFPKSQTPVRMRRNSFTPLSSSNTIRRPRNYSVGSRPLK) is disordered. Residues 456–479 (FPKSQTPVRMRRNSFTPLSSSNTI) show a composition bias toward polar residues. The residue at position 469 (serine 469) is a Phosphoserine. Threonine 471 is subject to Phosphothreonine. Residue threonine 478 is modified to Phosphothreonine; by PKC. A phosphoserine mark is found at serine 486 and serine 496. Residues 500–519 (ALDMQEGADQPKTQVSIPVV) are disordered. The span at 510–519 (PKTQVSIPVV) shows a compositional bias: polar residues.

This sequence in the C-terminal section; belongs to the phosphoglycerate mutase family. In terms of assembly, homodimer. Forms a heterodimer with PFKFB3. Post-translationally, phosphorylation by AMPK stimulates activity. As to expression, highest levels in kidney; also found in heart, brain, spleen, lung, liver, skeletal muscle and testis.

The catalysed reaction is beta-D-fructose 2,6-bisphosphate + H2O = beta-D-fructose 6-phosphate + phosphate. It catalyses the reaction beta-D-fructose 6-phosphate + ATP = beta-D-fructose 2,6-bisphosphate + ADP + H(+). Its activity is regulated as follows. Phosphorylation results in the activation of the kinase activity. In terms of biological role, synthesis and degradation of fructose 2,6-bisphosphate. This is 6-phosphofructo-2-kinase/fructose-2,6-bisphosphatase 2 (Pfkfb2) from Mus musculus (Mouse).